The chain runs to 92 residues: Small ribosomal subunit protein uS19c (92 aa).

The protein belongs to the universal ribosomal protein uS19 family.

It is found in the plastid. The protein localises to the chloroplast. Functionally, protein S19 forms a complex with S13 that binds strongly to the 16S ribosomal RNA. This chain is Small ribosomal subunit protein uS19c, found in Cyanidium caldarium (Red alga).